A 440-amino-acid chain; its full sequence is tRNA(Ile)-lysidine synthase (440 aa).

Residue 13–18 (SGGADS) participates in ATP binding.

Belongs to the tRNA(Ile)-lysidine synthase family.

The protein localises to the cytoplasm. It carries out the reaction cytidine(34) in tRNA(Ile2) + L-lysine + ATP = lysidine(34) in tRNA(Ile2) + AMP + diphosphate + H(+). Functionally, ligates lysine onto the cytidine present at position 34 of the AUA codon-specific tRNA(Ile) that contains the anticodon CAU, in an ATP-dependent manner. Cytidine is converted to lysidine, thus changing the amino acid specificity of the tRNA from methionine to isoleucine. In Solibacter usitatus (strain Ellin6076), this protein is tRNA(Ile)-lysidine synthase.